Consider the following 199-residue polypeptide: Dephospho-CoA kinase (199 aa).

Positions 3–199 (VLGLTGSIGM…AAARMPRRRP (197 aa)) constitute a DPCK domain. 11–16 (GMGKST) is an ATP binding site.

The protein belongs to the CoaE family.

The protein localises to the cytoplasm. It catalyses the reaction 3'-dephospho-CoA + ATP = ADP + CoA + H(+). It participates in cofactor biosynthesis; coenzyme A biosynthesis; CoA from (R)-pantothenate: step 5/5. Functionally, catalyzes the phosphorylation of the 3'-hydroxyl group of dephosphocoenzyme A to form coenzyme A. This is Dephospho-CoA kinase from Rhodopseudomonas palustris (strain HaA2).